The sequence spans 459 residues: GTPase Der (459 aa).

2 consecutive EngA-type G domains span residues 3–167 (FTLA…PEPV) and 188–363 (IRVA…AVWN). Residues 9-16 (GRPNVGKS), 56-60 (DTAGL), 119-122 (NKSE), 194-201 (GRPNAGKS), 241-245 (DTAGL), and 306-309 (NKWD) each bind GTP. The KH-like domain maps to 364–448 (RRVPTAALNR…PVRITLREKA (85 aa)).

This sequence belongs to the TRAFAC class TrmE-Era-EngA-EngB-Septin-like GTPase superfamily. EngA (Der) GTPase family. As to quaternary structure, associates with the 50S ribosomal subunit.

Functionally, GTPase that plays an essential role in the late steps of ribosome biogenesis. This Rhodopseudomonas palustris (strain TIE-1) protein is GTPase Der.